Here is a 2104-residue protein sequence, read N- to C-terminus: Myosin type-2 heavy chain 2 (2104 aa).

A Myosin N-terminal SH3-like domain is found at 35-85 (DERTWIWIPDSKESFVKAWIVEDLGEKYRVKLERDGSERIVDGFDAEKVNP). The Myosin motor domain maps to 89-767 (DMVDDMAALT…VLGSLEDRRN (679 aa)). 182–189 (GESGAGKT) serves as a coordination point for ATP. The interval 646-660 (LSSLMHQLEATQPHF) is actin-binding. The stretch at 829–2104 (LGTTQTDEYL…RSNRSPSVLR (1276 aa)) forms a coiled coil. 2 disordered regions span residues 1245–1278 (NRSVTQHTLDGNSPHPSFEEKHSGDPLKRIDGNN) and 1398–1426 (MEFTGLKPLSPSKISNLPSSQPGSPSKRS). The span at 1246 to 1259 (RSVTQHTLDGNSPH) shows a compositional bias: polar residues. Residues 1261–1278 (SFEEKHSGDPLKRIDGNN) are compositionally biased toward basic and acidic residues. Polar residues predominate over residues 1409 to 1424 (SKISNLPSSQPGSPSK). Ser-1421 bears the Phosphoserine mark.

This sequence belongs to the TRAFAC class myosin-kinesin ATPase superfamily. Myosin family. In terms of assembly, binds to cdc4 and rlc1.

Functionally, stabilizes the F-actin cables forming the F-actin ring that surrounds the nucleus during interphase. May work in conjunction with myo2. The chain is Myosin type-2 heavy chain 2 (myo3) from Schizosaccharomyces pombe (strain 972 / ATCC 24843) (Fission yeast).